The primary structure comprises 113 residues: Putative pterin-4-alpha-carbinolamine dehydratase (113 aa).

The protein belongs to the pterin-4-alpha-carbinolamine dehydratase family.

The enzyme catalyses (4aS,6R)-4a-hydroxy-L-erythro-5,6,7,8-tetrahydrobiopterin = (6R)-L-erythro-6,7-dihydrobiopterin + H2O. The sequence is that of Putative pterin-4-alpha-carbinolamine dehydratase from Nitrosomonas europaea (strain ATCC 19718 / CIP 103999 / KCTC 2705 / NBRC 14298).